We begin with the raw amino-acid sequence, 139 residues long: uncharacterized protein (139 aa).

The tract at residues 1 to 116 (MYNPWQVGAS…TRPRVVARGK (116 aa)) is disordered. 2 stretches are compositionally biased toward low complexity: residues 50–70 (RPRP…GPRP) and 84–110 (LPAY…TRPR).

This is an uncharacterized protein from Homo sapiens (Human).